The chain runs to 137 residues: Acidic phospholipase A2 Vur-PL3 (137 aa).

The signal sequence occupies residues 1–16; it reads MRTLWIVAVCLIGVEG. Disulfide bonds link Cys42/Cys131, Cys44/Cys60, Cys59/Cys111, Cys65/Cys137, Cys66/Cys104, Cys73/Cys97, and Cys91/Cys102. Ca(2+) is bound by residues Tyr43, Gly45, and Gly47. His63 is an active-site residue. Asp64 is a Ca(2+) binding site. Residue Asp105 is part of the active site.

It depends on Ca(2+) as a cofactor. In terms of tissue distribution, expressed by the venom gland.

The protein localises to the secreted. The catalysed reaction is a 1,2-diacyl-sn-glycero-3-phosphocholine + H2O = a 1-acyl-sn-glycero-3-phosphocholine + a fatty acid + H(+). The chain is Acidic phospholipase A2 Vur-PL3 from Vipera renardi (Steppe viper).